The following is a 309-amino-acid chain: Vacuolar membrane protein YOR292C (309 aa).

Residues 1–52 (MPLQLFGRDQIVVHYDNGNMSNDDQNHQSVLGSWTRRAAAALRTLMNKRIQR) lie on the Vacuolar side of the membrane. An N-linked (GlcNAc...) asparagine glycan is attached at Asn-19. A helical membrane pass occupies residues 53–73 (ITLTHWLLLVIWVTSLWKFTS). The Cytoplasmic portion of the chain corresponds to 74–81 (HYRQLYAN). Residues 82-102 (SAVFATLCTNILLFGISDILA) form a helical membrane-spanning segment. The Vacuolar segment spans residues 103-183 (QSIACFYSYH…KTDTFDFFRW (81 aa)). Asn-121 carries an N-linked (GlcNAc...) asparagine glycan. Residues 184–204 (GCFMFWGFFISFFQAPWYKFL) traverse the membrane as a helical segment. The Cytoplasmic portion of the chain corresponds to 205-225 (NFFYTEDPTVVQVFERVLSDQ). Residues 226–246 (LLYSPISLYCFFMFSNYVMEG) traverse the membrane as a helical segment. Topologically, residues 247-260 (GDKDTLGKKIQRLY) are vacuolar. Residues 261–281 (ISTLGCNYLVWPMVQFINFLI) traverse the membrane as a helical segment. The Cytoplasmic portion of the chain corresponds to 282 to 309 (MPRDFQAPFSSSVGVVWNCFLSMRNASK).

This sequence belongs to the peroxisomal membrane protein PXMP2/4 family. N-glycosylated.

It localises to the vacuole membrane. This is Vacuolar membrane protein YOR292C from Saccharomyces cerevisiae (strain ATCC 204508 / S288c) (Baker's yeast).